Reading from the N-terminus, the 382-residue chain is Pyrimidine monooxygenase RutA (382 aa).

Residues 68–69, Asn-134, Glu-143, 159–160, and Ser-209 contribute to the FMN site; these read IK and RY.

It belongs to the NtaA/SnaA/DszA monooxygenase family. RutA subfamily.

The catalysed reaction is uracil + FMNH2 + NADH + O2 = (Z)-3-ureidoacrylate + FMN + NAD(+) + H2O + H(+). It catalyses the reaction thymine + FMNH2 + NADH + O2 = (Z)-2-methylureidoacrylate + FMN + NAD(+) + H2O + H(+). Its function is as follows. Catalyzes the pyrimidine ring opening between N-3 and C-4 by an unusual flavin hydroperoxide-catalyzed mechanism, adding oxygen atoms in the process to yield ureidoacrylate peracid, that immediately reacts with FMN forming ureidoacrylate and FMN-N(5)-oxide. The FMN-N(5)-oxide reacts spontaneously with NADH to produce FMN. Requires the flavin reductase RutF to regenerate FMN in vivo. This Escherichia coli (strain K12 / MC4100 / BW2952) protein is Pyrimidine monooxygenase RutA.